Reading from the N-terminus, the 77-residue chain is uncharacterized protein (77 aa).

It is found in the plastid. Its subcellular location is the cyanelle. This is an uncharacterized protein from Cyanophora paradoxa.